A 642-amino-acid polypeptide reads, in one-letter code: Acid beta-fructofuranosidase (642 aa).

The Cytoplasmic portion of the chain corresponds to 1 to 22; sequence MRNDSPYTPLLNASHNNHRRRE. Positions 1–95 are cleaved as a propeptide — removed in mature form; sequence MRNDSPYTPL…LSGNLVGEGG (95 aa). Residues 23–43 form a helical; Signal-anchor for type II membrane protein membrane-spanning segment; that stretch reads LLLLFSGLLLLASIIAFSAYI. The Lumenal portion of the chain corresponds to 44-642; it reads AQPHADADVS…YHPDQKRQTS (599 aa). A glycan (N-linked (GlcNAc...) asparagine) is linked at Asn100. Substrate is bound by residues 119–122, Gln138, Trp146, 181–182, and 245–246; these read WMND, WT, and RD. Residue Asp122 is part of the active site. Asn267 is a glycosylation site (N-linked (GlcNAc...) asparagine). Substrate contacts are provided by Glu300 and Asp333. Cys490 and Cys538 are oxidised to a cystine. N-linked (GlcNAc...) asparagine glycosylation is found at Asn491 and Asn615.

This sequence belongs to the glycosyl hydrolase 32 family. May be present in two forms, a 70 kDa monomer and a heterodimer of the 30 kDa and 38 kDa subunits. The ratio of the levels of the two forms within cells appears to be regulated developmentally.

Its subcellular location is the membrane. The protein resides in the vacuole. It is found in the vacuole lumen. The catalysed reaction is Hydrolysis of terminal non-reducing beta-D-fructofuranoside residues in beta-D-fructofuranosides.. It participates in glycan biosynthesis; sucrose metabolism. The sequence is that of Acid beta-fructofuranosidase (VCINV) from Vicia faba (Broad bean).